Consider the following 494-residue polypeptide: Truncated non-functional calcium-binding mitochondrial carrier SAL1-1 (494 aa).

Residues 11-46 enclose the EF-hand 1 domain; it reads QRDIRYACLFKELDVKGNGQVTLDNLISAFEKNDHP. Residues Lys65, Asp70, Asp93, Asp95, Asp97, Lys99, and Glu104 each coordinate Ca(2+). 3 EF-hand domains span residues 80 to 115, 120 to 155, and 156 to 191; these read NAES…LDNQ, NELN…RGQA, and SHKK…VPRK. The Ca(2+) site is built by Thr161 and Ser166. Solcar repeat units follow at residues 225–332 and 345–434; these read IRGF…TKKI and LSKF…LKKM. A run of 5 helical transmembrane segments spans residues 231 to 248, 307 to 326, 355 to 368, 409 to 428, and 458 to 475; these read FIAG…TAPF, GNGL…FGSF, GLAG…VYPI, RCHS…FGDF, and TSNG…CLSN. Residues 452–494 form a Solcar 3; truncated repeat; the sequence is SKQPGCTSNGCIQWNCRSFCCLSNQSFKNKTTSPRNICTSLCV.

Belongs to the mitochondrial carrier (TC 2.A.29) family.

It localises to the mitochondrion inner membrane. Functionally, calcium-dependent mitochondrial solute carrier. The sequence is that of Truncated non-functional calcium-binding mitochondrial carrier SAL1-1 (SAL1) from Saccharomyces cerevisiae (strain ATCC 204508 / S288c) (Baker's yeast).